The chain runs to 248 residues: uncharacterized protein (248 aa).

Residues 33–57 are a coiled coil; the sequence is EWQLSEGQKRCEEINRQNRQLRVEK.

This is an uncharacterized protein from Escherichia coli (strain K12).